Consider the following 150-residue polypeptide: Catabolic 3-dehydroquinase 1 (150 aa).

Tyrosine 24 acts as the Proton acceptor in catalysis. The substrate site is built by asparagine 75, histidine 81, and aspartate 88. Histidine 101 serves as the catalytic Proton donor. Residues 102 to 103 and arginine 112 contribute to the substrate site; that span reads VS.

It belongs to the type-II 3-dehydroquinase family. As to quaternary structure, homododecamer. Adopts a ring-like structure, composed of an arrangement of two hexameric rings stacked on top of one another.

The catalysed reaction is 3-dehydroquinate = 3-dehydroshikimate + H2O. The protein operates within aromatic compound metabolism; 3,4-dihydroxybenzoate biosynthesis; 3,4-dihydroxybenzoate from 3-dehydroquinate: step 1/2. Functionally, is involved in the catabolism of quinate. Allows the utilization of quinate as carbon source via the beta-ketoadipate pathway. In Aspergillus fumigatus (strain ATCC MYA-4609 / CBS 101355 / FGSC A1100 / Af293) (Neosartorya fumigata), this protein is Catabolic 3-dehydroquinase 1.